Here is a 568-residue protein sequence, read N- to C-terminus: DNA ligase (568 aa).

Glu249 is an ATP binding site. The N6-AMP-lysine intermediate role is filled by Lys251. Positions 256, 271, 301, 342, 418, and 424 each coordinate ATP.

The protein belongs to the ATP-dependent DNA ligase family. It depends on Mg(2+) as a cofactor.

It carries out the reaction ATP + (deoxyribonucleotide)n-3'-hydroxyl + 5'-phospho-(deoxyribonucleotide)m = (deoxyribonucleotide)n+m + AMP + diphosphate.. Functionally, DNA ligase that seals nicks in double-stranded DNA during DNA replication, DNA recombination and DNA repair. This chain is DNA ligase, found in Methanocella arvoryzae (strain DSM 22066 / NBRC 105507 / MRE50).